The chain runs to 773 residues: Phenylalanine--tRNA ligase beta subunit (773 aa).

In terms of domain architecture, tRNA-binding spans 39–150; the sequence is LKAPDKVVVG…GKLELGRPLN (112 aa). The B5 domain maps to 391 to 467; the sequence is KELPIIPISI…RIIGIDNIAS (77 aa). 4 residues coordinate Mg(2+): Asp-445, Asp-451, Glu-454, and Glu-455. Residues 682–773 enclose the FDX-ACB domain; it reads SKFPAITRDL…TLKNLGLDLR (92 aa).

The protein belongs to the phenylalanyl-tRNA synthetase beta subunit family. Type 1 subfamily. In terms of assembly, tetramer of two alpha and two beta subunits. It depends on Mg(2+) as a cofactor.

Its subcellular location is the cytoplasm. It carries out the reaction tRNA(Phe) + L-phenylalanine + ATP = L-phenylalanyl-tRNA(Phe) + AMP + diphosphate + H(+). In Campylobacter jejuni (strain RM1221), this protein is Phenylalanine--tRNA ligase beta subunit.